The sequence spans 112 residues: Cytochrome c type-1 (112 aa).

Residues cysteine 20, cysteine 23, histidine 24, and methionine 85 each contribute to the heme c site.

Binds 1 heme c group covalently per subunit.

The protein localises to the mitochondrion intermembrane space. In terms of biological role, electron carrier between complex III (ubiquinol-cytochrome c oxireductase) and complex IV (cytochrome c oxidase). The sequence is that of Cytochrome c type-1 from Ascaris suum (Pig roundworm).